The primary structure comprises 940 residues: MSDYKFTLNLPETEFPMRGNLANREPEMLERWTKDGLYQQIRDSRIGRTPFILHDGPPYANGSIHIGHSVNKILKDIIVKSKTMSGFDAPYVPGWDCHGLPIELKVEQKVGKPGQKITAAEFREECRKYAAEQVNGQREDFIRLGVLGDWQNPYLTMDFSTEANIVRSLSKVIESGHLHKGVKPVHWCTDCGSALAEAEVEYEDKTSPAIDVAFVAADSKAVAAKFGVSDYSHPVSMVIWTTTPWTLPANRALSLSPELDYSLVEFEKDGVTQALILAEVLVESCLTRYNVESHTVLGTTKGAALELVCFNHPFLDFDVPAILGDHVTTDAGTGIVHTAPGHGQDDFVVGQKYGLEVANPVGDNGVYKPDTKYFAGQHVFKANDNVVALLREKGALLNHVAYRHSYPHCWRHKTPIIFRATPQWFISMDNHGLRTQALKEIEQTQWIPDWGQSRIEKMVENRPDWCISRQRTWGVPITLFVNRETEELHPDSVSLMERVANRIEQQGIQAWWDLDAAELLGDEADQYRKVTDTLDVWYDSGSTFSSVVAARPEFHGHGVDLYLEGSDQHRGWFMSSLMISTAMNGKAPYKQVLTHGFTVDGKGRKMSKSIGNVIAPQTVTNKLGADILRLWVAATDYSGEMTVSDEILNRSADAYRRIRNTARFLLANLNGFDPAKDLVAVEDMVALDRWVVRRAAALQQEIIEAYDQYNFHIVTQKLMQFCSVELGSFYLDIIKDRQYTAKQEGHARRSCQSALFHIAEAMVRWIAPVLSFTADEVWQLLPGERDAYVFTQEWYQGLKSVTLATDLSDDYWQQLLAVRNEVNKVIEQARRDKRIGGSLEAEVTLFADATLTEQLTHIGDELRFVLLTSEAKVLPLADATTEAVETELASLKLVVASSTAEKCERCWHHREEVGTIEAHPTLCTRCVTNIEGDGEVRQFA.

The 'HIGH' region signature appears at 58 to 68 (PYANGSIHIGH). E564 serves as a coordination point for L-isoleucyl-5'-AMP. Positions 605–609 (KMSKS) match the 'KMSKS' region motif. K608 serves as a coordination point for ATP. Zn(2+) contacts are provided by C903, C906, C923, and C926.

Belongs to the class-I aminoacyl-tRNA synthetase family. IleS type 1 subfamily. As to quaternary structure, monomer. Zn(2+) serves as cofactor.

It localises to the cytoplasm. It carries out the reaction tRNA(Ile) + L-isoleucine + ATP = L-isoleucyl-tRNA(Ile) + AMP + diphosphate. In terms of biological role, catalyzes the attachment of isoleucine to tRNA(Ile). As IleRS can inadvertently accommodate and process structurally similar amino acids such as valine, to avoid such errors it has two additional distinct tRNA(Ile)-dependent editing activities. One activity is designated as 'pretransfer' editing and involves the hydrolysis of activated Val-AMP. The other activity is designated 'posttransfer' editing and involves deacylation of mischarged Val-tRNA(Ile). The protein is Isoleucine--tRNA ligase of Shewanella putrefaciens (strain CN-32 / ATCC BAA-453).